The primary structure comprises 149 residues: Calmodulin-1 (149 aa).

The residue at position 2 (Ala-2) is an N-acetylalanine. 4 consecutive EF-hand domains span residues 8–43 (EQIAEFKEAFSLFDKDGDGTITTKELGTVMRSLGQN), 44–79 (PTEAELQDMINEVDADGNGTIDFPEFLTMMARKMKD), 81–116 (DSEEEIREAFRVFDKDGNGFISAAELRHVMTNLGEK), and 117–149 (LTDEEVDEMIREADIDGDGQVNYEEFVTMMTSK). Ca(2+) is bound by residues Asp-21, Asp-23, Asp-25, Thr-27, Glu-32, Asp-57, Asp-59, Asn-61, Thr-63, Glu-68, Asp-94, Asp-96, Asn-98, and Glu-105. Lys-116 is modified (N6,N6,N6-trimethyllysine). Ca(2+) contacts are provided by Asp-130, Asp-132, Asp-134, Gln-136, and Glu-141.

This sequence belongs to the calmodulin family.

Calmodulin mediates the control of a large number of enzymes, ion channels and other proteins by Ca(2+). Among the enzymes to be stimulated by the calmodulin-Ca(2+) complex are a number of protein kinases and phosphatases. The chain is Calmodulin-1 from Branchiostoma floridae (Florida lancelet).